The chain runs to 270 residues: MTTTHPSGFAPAASPLAPTMIHTPDGAISAGITSIPSQGDDMPAYYARPKASDGALPVVIVVQEIFGVHEHIRDICRRLALEGYLAIAPELYFREGDPNDFADIPTLLSGLVAKVPDSQVLADLDHVASWASRNGGDAHRLMITGFCWGGRITWLYAAHNPQLKAAVAWYGKLVGDTSLNSPKHPVDIATDLNAPVLGLYGGQDTSIPQESVETMRQALRAANAKAEIVVYPDAGHAFNADYRPGYHEASAKDGWQRMLEWFAQYGGKKG.

Residues cysteine 147, aspartate 204, and histidine 236 contribute to the active site.

The protein belongs to the dienelactone hydrolase family.

The catalysed reaction is 2-(5-oxo-2,5-dihydrofuran-2-ylidene)acetate + H2O = 4-oxohex-2-enedioate + H(+). This Salmonella typhimurium (strain LT2 / SGSC1412 / ATCC 700720) protein is Putative carboxymethylenebutenolidase (ysgA).